A 197-amino-acid polypeptide reads, in one-letter code: dTTP/UTP pyrophosphatase (197 aa).

Aspartate 70 (proton acceptor) is an active-site residue.

This sequence belongs to the Maf family. YhdE subfamily. Requires a divalent metal cation as cofactor.

The protein resides in the cytoplasm. It catalyses the reaction dTTP + H2O = dTMP + diphosphate + H(+). The enzyme catalyses UTP + H2O = UMP + diphosphate + H(+). In terms of biological role, nucleoside triphosphate pyrophosphatase that hydrolyzes dTTP and UTP. May have a dual role in cell division arrest and in preventing the incorporation of modified nucleotides into cellular nucleic acids. The protein is dTTP/UTP pyrophosphatase of Methanosarcina mazei (strain ATCC BAA-159 / DSM 3647 / Goe1 / Go1 / JCM 11833 / OCM 88) (Methanosarcina frisia).